Here is a 387-residue protein sequence, read N- to C-terminus: [LysW]-aminoadipate semialdehyde/glutamate semialdehyde transaminase (387 aa).

Pyridoxal 5'-phosphate-binding positions include 96–97 and F123; that span reads GT. Position 126 (R126) interacts with substrate. A pyridoxal 5'-phosphate-binding site is contributed by 207 to 210; it reads DEVQ. An N6-(pyridoxal phosphate)lysine modification is found at K236. Residue S264 participates in substrate binding. T265 is a pyridoxal 5'-phosphate binding site.

The protein belongs to the class-III pyridoxal-phosphate-dependent aminotransferase family. LysJ subfamily. In terms of assembly, homodimer. Pyridoxal 5'-phosphate serves as cofactor.

The protein localises to the cytoplasm. It carries out the reaction [amino-group carrier protein]-C-terminal-gamma-(L-lysyl)-L-glutamate + 2-oxoglutarate = [amino-group carrier protein]-C-terminal-N-(1-carboxy-5-oxopentan-1-yl)-L-glutamine + L-glutamate. The enzyme catalyses [amino-group carrier protein]-C-terminal-gamma-(L-ornithyl)-L-glutamate + 2-oxoglutarate = [amino-group carrier protein]-C-terminal-gamma-(L-glutamyl-5-semialdehyde)-L-glutamate + L-glutamate. Its pathway is amino-acid biosynthesis; L-lysine biosynthesis via AAA pathway; L-lysine from L-alpha-aminoadipate (Thermus route): step 4/5. The protein operates within amino-acid biosynthesis; L-arginine biosynthesis. Its function is as follows. Involved in both the arginine and lysine biosynthetic pathways. This is [LysW]-aminoadipate semialdehyde/glutamate semialdehyde transaminase from Sulfurisphaera tokodaii (strain DSM 16993 / JCM 10545 / NBRC 100140 / 7) (Sulfolobus tokodaii).